A 446-amino-acid chain; its full sequence is Enolase (446 aa).

Substrate-binding residues include histidine 164 and glutamate 173. The Proton donor role is filled by glutamate 216. Aspartate 251, glutamate 302, and aspartate 329 together coordinate Mg(2+). Residues glutamate 302 and aspartate 329 each contribute to the substrate site. Catalysis depends on lysine 354, which acts as the Proton acceptor. Residues 381 to 384 (SHRS) and lysine 405 each bind substrate.

It belongs to the enolase family. Homodimer. Requires Mg(2+) as cofactor.

It localises to the cytoplasm. It carries out the reaction (2R)-2-phosphoglycerate = phosphoenolpyruvate + H2O. Its pathway is carbohydrate degradation; glycolysis; pyruvate from D-glyceraldehyde 3-phosphate: step 4/5. The polypeptide is Enolase (ENO1) (Oryza sativa subsp. japonica (Rice)).